The following is a 450-amino-acid chain: Sulfite exporter TauE/SafE family protein 1 (450 aa).

12 consecutive transmembrane segments (helical) span residues 5–25 (LVPL…SALA), 48–68 (TIEV…AASI), 70–90 (SAGG…IAGL), 97–117 (SFSA…NLFL), 130–150 (FDLA…GVIC), 153–173 (MFPN…STMK), 223–243 (FPWM…SINL), 261–281 (ALYW…TLCI), 316–336 (VMAL…GMLI), 340–360 (LLQI…MVLF), 378–398 (GTAA…LMVV), and 408–428 (ASII…LMTT).

It belongs to the 4-toluene sulfonate uptake permease (TSUP) (TC 2.A.102) family.

It localises to the membrane. The polypeptide is Sulfite exporter TauE/SafE family protein 1 (Arabidopsis thaliana (Mouse-ear cress)).